Consider the following 337-residue polypeptide: MKRIAVLTSGGDAPGMNAAIRAVVRKAISEGMEVYGINRGYAGMVDGDIFPLGSKEVGDKISRGGTFLYSARYPEFAQLEGQLAGIEQLKKHGIEGVVVIGGDGSYHGAMRLTEHGFPAVGIPGTIDNDIAGTDYTIGFDTAVNTAVEAIDKLRDTSSSHGRTFVVEVMGRNAGDIALWAGIASGADQIIVPEEEFDIHKVVSTIKDDFENRGKNHHIIVLAEGVMSGEAFAQQLKEAGDESDLRVTNLGHILRGGSPTARDRVIASWMGAHAVELLKEGKGGLAVGIHNEELVESPILGSAEDGALFSLTDEGNIVVNNPHKARLDYAALNRSLAQ.

Position 11 (Gly-11) interacts with ATP. 21 to 25 (RAVVR) contacts ADP. Residues 72 to 73 (RY) and 102 to 105 (GDGS) contribute to the ATP site. Asp-103 provides a ligand contact to Mg(2+). Position 125–127 (125–127 (TID)) interacts with substrate. Asp-127 serves as the catalytic Proton acceptor. Arg-154 contributes to the ADP binding site. Residues Arg-162 and 169–171 (MGR) contribute to the substrate site. ADP contacts are provided by residues 185–187 (GAD), Arg-212, and 214–216 (KNH). Substrate is bound by residues Glu-223, Arg-245, and 251–254 (HILR).

The protein belongs to the phosphofructokinase type A (PFKA) family. ATP-dependent PFK group I subfamily. Prokaryotic clade 'B1' sub-subfamily. Homotetramer. Mg(2+) serves as cofactor.

The protein localises to the cytoplasm. The enzyme catalyses beta-D-fructose 6-phosphate + ATP = beta-D-fructose 1,6-bisphosphate + ADP + H(+). The protein operates within carbohydrate degradation; glycolysis; D-glyceraldehyde 3-phosphate and glycerone phosphate from D-glucose: step 3/4. Allosterically activated by ADP and other diphosphonucleosides, and allosterically inhibited by phosphoenolpyruvate. Its function is as follows. Catalyzes the phosphorylation of D-fructose 6-phosphate to fructose 1,6-bisphosphate by ATP, the first committing step of glycolysis. In Streptococcus equi subsp. equi (strain 4047), this protein is ATP-dependent 6-phosphofructokinase.